A 464-amino-acid polypeptide reads, in one-letter code: Argininosuccinate lyase (464 aa).

The protein belongs to the lyase 1 family. Argininosuccinate lyase subfamily.

The protein resides in the cytoplasm. It carries out the reaction 2-(N(omega)-L-arginino)succinate = fumarate + L-arginine. The protein operates within amino-acid biosynthesis; L-arginine biosynthesis; L-arginine from L-ornithine and carbamoyl phosphate: step 3/3. The protein is Argininosuccinate lyase of Pseudomonas paraeruginosa (strain DSM 24068 / PA7) (Pseudomonas aeruginosa (strain PA7)).